A 195-amino-acid polypeptide reads, in one-letter code: dTTP/UTP pyrophosphatase (195 aa).

The active-site Proton acceptor is the aspartate 77.

The protein belongs to the Maf family. YhdE subfamily. Requires a divalent metal cation as cofactor.

It localises to the cytoplasm. The catalysed reaction is dTTP + H2O = dTMP + diphosphate + H(+). It carries out the reaction UTP + H2O = UMP + diphosphate + H(+). Nucleoside triphosphate pyrophosphatase that hydrolyzes dTTP and UTP. May have a dual role in cell division arrest and in preventing the incorporation of modified nucleotides into cellular nucleic acids. The polypeptide is dTTP/UTP pyrophosphatase (Flavobacterium psychrophilum (strain ATCC 49511 / DSM 21280 / CIP 103535 / JIP02/86)).